Here is a 122-residue protein sequence, read N- to C-terminus: Large ribosomal subunit protein uL14 (122 aa).

This sequence belongs to the universal ribosomal protein uL14 family. Part of the 50S ribosomal subunit. Forms a cluster with proteins L3 and L19. In the 70S ribosome, L14 and L19 interact and together make contacts with the 16S rRNA in bridges B5 and B8.

Binds to 23S rRNA. Forms part of two intersubunit bridges in the 70S ribosome. The protein is Large ribosomal subunit protein uL14 of Idiomarina loihiensis (strain ATCC BAA-735 / DSM 15497 / L2-TR).